The following is a 367-amino-acid chain: rRNA processing protein RCL1 (367 aa).

Position 2 is an N-acetylserine (Ser-2).

Belongs to the RNA 3'-terminal cyclase family. Type 2 subfamily. Interacts directly with BMS1 and the U3 snoRNA to form a stable subcomplex. Component of the 90S small subunit processome also known as 90S pre-ribosome that consists of the 35S pre-rRNA, early-associating ribosomal proteins most of which are part of the small ribosomal subunit, the U3 snoRNA and associated proteins.

The protein resides in the nucleus. It is found in the nucleolus. Functionally, does not have cyclase activity. Plays a role in 40S-ribosomal-subunit biogenesis in the early pre-rRNA processing steps at sites A0, A1 and A2 that are required for proper maturation of the 18S RNA. RCL1 activates BMS1 by promoting GDP/GTP exchange. This is rRNA processing protein RCL1 (RCL1) from Saccharomyces cerevisiae (strain ATCC 204508 / S288c) (Baker's yeast).